Here is a 243-residue protein sequence, read N- to C-terminus: Carboxy-S-adenosyl-L-methionine synthase (243 aa).

S-adenosyl-L-methionine-binding positions include Y40, 65 to 67 (GSS), 90 to 91 (DN), 118 to 119 (DI), N133, and R200.

This sequence belongs to the class I-like SAM-binding methyltransferase superfamily. Cx-SAM synthase family. As to quaternary structure, homodimer.

It catalyses the reaction prephenate + S-adenosyl-L-methionine = carboxy-S-adenosyl-L-methionine + 3-phenylpyruvate + H2O. In terms of biological role, catalyzes the conversion of S-adenosyl-L-methionine (SAM) to carboxy-S-adenosyl-L-methionine (Cx-SAM). In Shewanella frigidimarina (strain NCIMB 400), this protein is Carboxy-S-adenosyl-L-methionine synthase.